A 179-amino-acid polypeptide reads, in one-letter code: Large ribosomal subunit protein uL5 (179 aa).

The protein belongs to the universal ribosomal protein uL5 family. In terms of assembly, part of the 50S ribosomal subunit; part of the 5S rRNA/L5/L18/L25 subcomplex. Contacts the 5S rRNA and the P site tRNA. Forms a bridge to the 30S subunit in the 70S ribosome.

Functionally, this is one of the proteins that bind and probably mediate the attachment of the 5S RNA into the large ribosomal subunit, where it forms part of the central protuberance. In the 70S ribosome it contacts protein S13 of the 30S subunit (bridge B1b), connecting the 2 subunits; this bridge is implicated in subunit movement. Contacts the P site tRNA; the 5S rRNA and some of its associated proteins might help stabilize positioning of ribosome-bound tRNAs. The protein is Large ribosomal subunit protein uL5 of Buchnera aphidicola subsp. Baizongia pistaciae (strain Bp).